The sequence spans 369 residues: Protein-glutamate methylesterase/protein-glutamine glutaminase of group 3 operon (369 aa).

In terms of domain architecture, Response regulatory spans 11 to 128 (RVLIVDDSAA…DLERQEASIR (118 aa)). A 4-aspartylphosphate modification is found at aspartate 62. Positions 136-168 (ATETTRRRSQPEPRPLAPGPKLTADEILPARPP) are disordered. Residues 170–358 (PVPETMPVVC…LDRLAARIME (189 aa)) enclose the CheB-type methylesterase domain. Active-site residues include serine 183, histidine 209, and aspartate 305.

This sequence belongs to the CheB family. Phosphorylated in vitro by CheA2, but not by CheA1. Phosphorylation of the N-terminal regulatory domain activates the methylesterase activity.

The protein resides in the cytoplasm. The catalysed reaction is [protein]-L-glutamate 5-O-methyl ester + H2O = L-glutamyl-[protein] + methanol + H(+). It carries out the reaction L-glutaminyl-[protein] + H2O = L-glutamyl-[protein] + NH4(+). Functionally, involved in chemotaxis. Part of a chemotaxis signal transduction system that modulates chemotaxis in response to various stimuli. Catalyzes the demethylation of specific methylglutamate residues introduced into the chemoreceptors (methyl-accepting chemotaxis proteins or MCP) by CheR. Also mediates the irreversible deamidation of specific glutamine residues to glutamic acid. The polypeptide is Protein-glutamate methylesterase/protein-glutamine glutaminase of group 3 operon (cheB3) (Cereibacter sphaeroides (Rhodobacter sphaeroides)).